Consider the following 351-residue polypeptide: S-adenosylmethionine:tRNA ribosyltransferase-isomerase (351 aa).

Belongs to the QueA family. Monomer.

The protein localises to the cytoplasm. The catalysed reaction is 7-aminomethyl-7-carbaguanosine(34) in tRNA + S-adenosyl-L-methionine = epoxyqueuosine(34) in tRNA + adenine + L-methionine + 2 H(+). It functions in the pathway tRNA modification; tRNA-queuosine biosynthesis. Transfers and isomerizes the ribose moiety from AdoMet to the 7-aminomethyl group of 7-deazaguanine (preQ1-tRNA) to give epoxyqueuosine (oQ-tRNA). The chain is S-adenosylmethionine:tRNA ribosyltransferase-isomerase from Photobacterium profundum (strain SS9).